The chain runs to 238 residues: ATP-dependent Clp protease ATP-binding subunit CLPT1, chloroplastic (238 aa).

The N-terminal 64 residues, 1–64 (MASYTVSFIP…VPKLRCLTSA (64 aa)), are a transit peptide targeting the chloroplast. One can recognise a Clp R domain in the interval 83-228 (IPKWSARAIK…KEVEKSMNED (146 aa)). 2 repeat regions span residues 86 to 151 (WSAR…LGKS) and 163 to 228 (LTEP…MNED).

Belongs to the ClpA/ClpB family. As to quaternary structure, monomer and homodimer. Binds to the CLP3-6 ring (P-ring). The dimers monomerize before association to the P-ring. Component of the chloroplastic Clp protease core complex which consist of at least 16 proteins: CLPP4 (3 copies), CLPP5 (3 copies), CLPR4 (2 copies), ClpP1 (1 copy), CLPP6 (1 copy), CLPR2 (1 copy), CLPT1 (1 copy), CLPT2 (1 copy) and 3 copies of CLPP3 and/or CLPR1 and/or CLPR3. Interacts with CLPC2 and CLPD. Interacts with CPN21. No interactions with CLPS1.

The protein resides in the plastid. It is found in the chloroplast. Functionally, accessory protein regulating the assembly of the plastidial Clp protease system. CLPT1 first binds to the heptameric P-ring containing the CLP3-6 subunits followed by CLPT2, and only then does the P-ring combine with the R-ring composed of the clpP1 and CLPR1-4 subunits. Once the core complex is fully assembled, it then associates to the CLPC chaperone partner to form the functional protease. CLPT1 and CLPT2 are partially redundant. The polypeptide is ATP-dependent Clp protease ATP-binding subunit CLPT1, chloroplastic (Arabidopsis thaliana (Mouse-ear cress)).